Reading from the N-terminus, the 917-residue chain is Thiamine biosynthesis bifunctional protein ThiEC (917 aa).

The thiamine-phosphate synthase stretch occupies residues 1–243; that stretch reads MSNEYPYASM…EGWKAVRGDK (243 aa). Residues 48-52 and Asp-84 each bind 4-amino-2-methyl-5-(diphosphooxymethyl)pyrimidine; that span reads QLRAK. Mg(2+)-binding residues include Asp-85 and Asp-109. Ser-128 serves as a coordination point for 4-amino-2-methyl-5-(diphosphooxymethyl)pyrimidine. 157-159 is a binding site for 2-[(2R,5Z)-2-carboxy-4-methylthiazol-5(2H)-ylidene]ethyl phosphate; it reads STT. Lys-160 lines the 4-amino-2-methyl-5-(diphosphooxymethyl)pyrimidine pocket. Residues Gly-196 and 216 to 217 contribute to the 2-[(2R,5Z)-2-carboxy-4-methylthiazol-5(2H)-ylidene]ethyl phosphate site; that span reads VS. The interval 256–311 is disordered; the sequence is PATDTQAAQEGAAKPGSEATEKKFTNAKDAKDAQKLAKQQRVDIAARGSKQRDKAH. The interval 271–917 is phosphomethylpyrimidine synthase; the sequence is GSEATEKKFT…GGKLYSTAQE (647 aa). Residues 274 to 290 show a composition bias toward basic and acidic residues; the sequence is ATEKKFTNAKDAKDAQK. 5-amino-1-(5-phospho-beta-D-ribosyl)imidazole is bound by residues Asn-487, Met-516, Tyr-545, His-581, 601–603, 642–645, and Glu-681; these read SRG and DGLR. His-685 provides a ligand contact to Zn(2+). Tyr-708 is a 5-amino-1-(5-phospho-beta-D-ribosyl)imidazole binding site. His-749 is a Zn(2+) binding site. Residues Cys-829, Cys-832, and Cys-837 each coordinate [4Fe-4S] cluster.

In the N-terminal section; belongs to the thiamine-phosphate synthase family. This sequence in the C-terminal section; belongs to the ThiC family. [4Fe-4S] cluster serves as cofactor.

It catalyses the reaction 2-[(2R,5Z)-2-carboxy-4-methylthiazol-5(2H)-ylidene]ethyl phosphate + 4-amino-2-methyl-5-(diphosphooxymethyl)pyrimidine + 2 H(+) = thiamine phosphate + CO2 + diphosphate. It carries out the reaction 2-(2-carboxy-4-methylthiazol-5-yl)ethyl phosphate + 4-amino-2-methyl-5-(diphosphooxymethyl)pyrimidine + 2 H(+) = thiamine phosphate + CO2 + diphosphate. The catalysed reaction is 4-methyl-5-(2-phosphooxyethyl)-thiazole + 4-amino-2-methyl-5-(diphosphooxymethyl)pyrimidine + H(+) = thiamine phosphate + diphosphate. The enzyme catalyses 5-amino-1-(5-phospho-beta-D-ribosyl)imidazole + S-adenosyl-L-methionine = 4-amino-2-methyl-5-(phosphooxymethyl)pyrimidine + CO + 5'-deoxyadenosine + formate + L-methionine + 3 H(+). It participates in cofactor biosynthesis; thiamine diphosphate biosynthesis; thiamine phosphate from 4-amino-2-methyl-5-diphosphomethylpyrimidine and 4-methyl-5-(2-phosphoethyl)-thiazole: step 1/1. In terms of biological role, condenses 4-methyl-5-(beta-hydroxyethyl)thiazole monophosphate (THZ-P) and 2-methyl-4-amino-5-hydroxymethyl pyrimidine pyrophosphate (HMP-PP) to form thiamine monophosphate (TMP). Catalyzes the synthesis of the hydroxymethylpyrimidine phosphate (HMP-P) moiety of thiamine from aminoimidazole ribotide (AIR) in a radical S-adenosyl-L-methionine (SAM)-dependent reaction. The chain is Thiamine biosynthesis bifunctional protein ThiEC (thiE/thiC) from Bifidobacterium longum (strain NCC 2705).